The primary structure comprises 146 residues: Hemoglobin subunit beta (146 aa).

Val1 is subject to N-acetylvaline. The Globin domain occupies 2-146 (HLSGGEKSAV…VAHALGHKYH (145 aa)). Thr12 bears the Phosphothreonine mark. Residue Lys59 is modified to N6-acetyllysine. Residue His63 participates in heme b binding. Lys82 carries the post-translational modification N6-acetyllysine. Residue His92 coordinates heme b. Cys93 bears the S-nitrosocysteine mark. Lys144 carries the post-translational modification N6-acetyllysine.

This sequence belongs to the globin family. Heterotetramer of two alpha chains and two beta chains. Red blood cells.

In terms of biological role, involved in oxygen transport from the lung to the various peripheral tissues. The polypeptide is Hemoglobin subunit beta (HBB) (Ornithorhynchus anatinus (Duckbill platypus)).